Reading from the N-terminus, the 361-residue chain is Chorismate synthase (361 aa).

Arginine 48 and arginine 54 together coordinate NADP(+). FMN is bound by residues 125 to 127 (RSS), 238 to 239 (NA), glycine 278, 293 to 297 (KPTSS), and arginine 319.

This sequence belongs to the chorismate synthase family. As to quaternary structure, homotetramer. It depends on FMNH2 as a cofactor.

The enzyme catalyses 5-O-(1-carboxyvinyl)-3-phosphoshikimate = chorismate + phosphate. Its pathway is metabolic intermediate biosynthesis; chorismate biosynthesis; chorismate from D-erythrose 4-phosphate and phosphoenolpyruvate: step 7/7. Catalyzes the anti-1,4-elimination of the C-3 phosphate and the C-6 proR hydrogen from 5-enolpyruvylshikimate-3-phosphate (EPSP) to yield chorismate, which is the branch point compound that serves as the starting substrate for the three terminal pathways of aromatic amino acid biosynthesis. This reaction introduces a second double bond into the aromatic ring system. The protein is Chorismate synthase of Yersinia pseudotuberculosis serotype O:1b (strain IP 31758).